Here is a 726-residue protein sequence, read N- to C-terminus: Catalase-peroxidase (726 aa).

A cross-link (tryptophyl-tyrosyl-methioninium (Trp-Tyr) (with M-250)) is located at residues 96–224 (WHSAGTYRIA…LAAVMMGLIY (129 aa)). The active-site Proton acceptor is the H97. The segment at residues 224-250 (YVNPEGVDGKPDPLKTAHDMRVTFARM) is a cross-link (tryptophyl-tyrosyl-methioninium (Tyr-Met) (with W-96)). Residue H265 participates in heme b binding.

The protein belongs to the peroxidase family. Peroxidase/catalase subfamily. As to quaternary structure, homodimer or homotetramer. Requires heme b as cofactor. Formation of the three residue Trp-Tyr-Met cross-link is important for the catalase, but not the peroxidase activity of the enzyme.

The enzyme catalyses H2O2 + AH2 = A + 2 H2O. The catalysed reaction is 2 H2O2 = O2 + 2 H2O. Bifunctional enzyme with both catalase and broad-spectrum peroxidase activity. This chain is Catalase-peroxidase, found in Vibrio campbellii (strain ATCC BAA-1116).